The primary structure comprises 633 residues: Threonine--tRNA ligase (633 aa).

The 59-residue stretch at 1–59 folds into the TGS domain; the sequence is MIRITFSAEQKVKEYSGKVTGFDILQPDVLKEAIAFKVNGELHDLSREIEADAEIEVIQ. The interval 240–532 is catalytic; sequence DHRKIAKDMD…LIENYAGKFP (293 aa). Residues cysteine 332, histidine 383, and histidine 509 each coordinate Zn(2+).

Belongs to the class-II aminoacyl-tRNA synthetase family. As to quaternary structure, homodimer. The cofactor is Zn(2+).

It is found in the cytoplasm. It carries out the reaction tRNA(Thr) + L-threonine + ATP = L-threonyl-tRNA(Thr) + AMP + diphosphate + H(+). Catalyzes the attachment of threonine to tRNA(Thr) in a two-step reaction: L-threonine is first activated by ATP to form Thr-AMP and then transferred to the acceptor end of tRNA(Thr). Also edits incorrectly charged L-seryl-tRNA(Thr). The polypeptide is Threonine--tRNA ligase (Wolbachia sp. subsp. Drosophila simulans (strain wRi)).